A 238-amino-acid chain; its full sequence is tRNA (guanine-N(7)-)-methyltransferase (238 aa).

Residues E68, E93, D120, and D143 each coordinate S-adenosyl-L-methionine. Residue D143 is part of the active site. Residues K147, D179, and 216–219 each bind substrate; that span reads TKFE.

Belongs to the class I-like SAM-binding methyltransferase superfamily. TrmB family.

The enzyme catalyses guanosine(46) in tRNA + S-adenosyl-L-methionine = N(7)-methylguanosine(46) in tRNA + S-adenosyl-L-homocysteine. It functions in the pathway tRNA modification; N(7)-methylguanine-tRNA biosynthesis. Its function is as follows. Catalyzes the formation of N(7)-methylguanine at position 46 (m7G46) in tRNA. The protein is tRNA (guanine-N(7)-)-methyltransferase of Shewanella putrefaciens (strain CN-32 / ATCC BAA-453).